The primary structure comprises 858 residues: Piwi-like protein 1 (858 aa).

Residues methionine 1 to glycine 13 are compositionally biased toward basic residues. Residues methionine 1–alanine 56 are disordered. The segment covering glutamine 16–proline 26 has biased composition (low complexity). One can recognise a PAZ domain in the interval threonine 276–glycine 388. The tract at residues threonine 314 to arginine 316 is required for binding 2'-O-methylated 3'-end of piRNAs. Residues serine 476–glutamate 612 form an MID region region. The Piwi domain maps to methionine 552–histidine 844. Catalysis depends on residues aspartate 629, glutamate 667, aspartate 699, and histidine 833.

Belongs to the argonaute family. Piwi subfamily. It depends on Mg(2+) as a cofactor. Post-translationally, methylated on arginine residues; required for the interaction with Tudor domain-containing protein and subsequent localization to the meiotic nuage, also named P granule. As to expression, expressed exclusively in the adult gonads; expression in the ovary weaker than in the testis (at protein level). During neurogenesis and organogenesis, expression is detected in CNS (midbrain and eye) and fin buds. Starting from 24 hours post-fertilization, expression is found in the genital ridge.

It is found in the cytoplasm. Plays a central role during gametogenesis by repressing transposable elements and preventing their mobilization, which is essential for the germline integrity. Acts via the piRNA metabolic process, which mediates the repression of transposable elements during meiosis by forming complexes composed of piRNAs and Piwi proteins and governs the methylation and subsequent repression of transposons. Directly binds methylated piRNAs, a class of 24 to 30 nucleotide RNAs that are generated by a Dicer-independent mechanism and are primarily derived from transposons and other repeated sequence elements. Has a strong preference for piRNAs with a uridine nucleotide at their 5'-end (g1U preference, also named 1U-bias) and binds piRNAs in an opposite direction compared to piwil2/zili. Participates in a piRNA amplification loop with piwil2/zili. Not involved in the piRNA amplification loop, also named ping-pong amplification cycle. Acts as an endoribonuclease that cleaves transposon messenger RNAs. The protein is Piwi-like protein 1 (piwil1) of Danio rerio (Zebrafish).